The chain runs to 219 residues: Triosephosphate isomerase (219 aa).

A substrate-binding site is contributed by 6 to 8 (NYK). The active-site Electrophile is His90. The Proton acceptor role is filled by Glu138. Substrate is bound by residues Ile143, Gly178, and 199–200 (AS).

The protein belongs to the triosephosphate isomerase family. In terms of assembly, homotetramer; dimer of dimers.

The protein localises to the cytoplasm. The catalysed reaction is D-glyceraldehyde 3-phosphate = dihydroxyacetone phosphate. The protein operates within carbohydrate biosynthesis; gluconeogenesis. It participates in carbohydrate degradation; glycolysis; D-glyceraldehyde 3-phosphate from glycerone phosphate: step 1/1. In terms of biological role, involved in the gluconeogenesis. Catalyzes stereospecifically the conversion of dihydroxyacetone phosphate (DHAP) to D-glyceraldehyde-3-phosphate (G3P). This Methanocaldococcus jannaschii (strain ATCC 43067 / DSM 2661 / JAL-1 / JCM 10045 / NBRC 100440) (Methanococcus jannaschii) protein is Triosephosphate isomerase.